The following is a 301-amino-acid chain: Homoserine O-acetyltransferase (301 aa).

Cys-142 (acyl-thioester intermediate) is an active-site residue. Substrate contacts are provided by Lys-163 and Ser-192. The active-site Proton acceptor is the His-235. The active site involves Glu-237. Arg-249 contacts substrate.

The protein belongs to the MetA family.

Its subcellular location is the cytoplasm. It catalyses the reaction L-homoserine + acetyl-CoA = O-acetyl-L-homoserine + CoA. Its pathway is amino-acid biosynthesis; L-methionine biosynthesis via de novo pathway; O-acetyl-L-homoserine from L-homoserine: step 1/1. In terms of biological role, transfers an acetyl group from acetyl-CoA to L-homoserine, forming acetyl-L-homoserine. In Clostridium acetobutylicum (strain ATCC 824 / DSM 792 / JCM 1419 / IAM 19013 / LMG 5710 / NBRC 13948 / NRRL B-527 / VKM B-1787 / 2291 / W), this protein is Homoserine O-acetyltransferase.